We begin with the raw amino-acid sequence, 1111 residues long: Nuclear migration and anchoring protein unc-84 (1111 aa).

Topologically, residues 1 to 509 are nuclear; sequence MAPATEADNN…LTDKKSSKFS (509 aa). Required for nuclear envelope localization stretches follow at residues 118–244 and 503–507; these read YILR…SQTL and KKSSK. A disordered region spans residues 232–253; it reads ERASRMTTRSQTLERSRKFDGL. Residues 243-252 show a composition bias toward basic and acidic residues; sequence TLERSRKFDG. A helical membrane pass occupies residues 510–530; that stretch reads WCQILGLLLALLFAIFLLGFL. At 531–1111 the chain is on the perinuclear space side; it reads TSDNTAIRVK…LRVHGKVVQV (581 aa). Residues 912–1111 are interaction with zyg-12; it reads QYDKNHLEAI…LRVHGKVVQV (200 aa). In terms of domain architecture, SUN spans 945–1109; that stretch reads GGAVVSTRCS…YRLRVHGKVV (165 aa).

As to quaternary structure, component of the unc-83-unc-84 LINC complex which contains at least unc-83 and unc-84. Within the unc-83-unc-84 LINC complex interacts (via C-terminus) with unc-83; the interaction is probably required to recruit unc-83 to the nuclear membrane. Most likely interacts with anc-1; the interaction is probably required to recruit anc-1 to the nuclear envelope. Interacts (via C-terminus) with zyg-12 (via C-terminus); the interaction is direct. May interact with lmn-1; this interaction may be required to complete the connection between the nuclear lamina and the cytoskeleton. As to expression, expressed in all somatic cells. Not expressed in germ cells in the mitotic and transition zones of the gonad. One study shows expression at the beginning of the late pachytene stage in the proximal gonad, but there is no expression in the male germline, suggesting expression is specific to oogenesis in hermaphrodites.

It is found in the nucleus inner membrane. It localises to the cytoplasm. The protein localises to the cytoskeleton. Involved in nuclear migration and anchoring in hypodermal precursor cells. Most likely recruits anc-1 to the nuclear envelope where anc-1 functions to tether the nucleus to the actin cytoskeleton. Component of the unc-83-unc-84 LINC (LInker of Nucleoskeleton and Cytoskeleton) complex where it recruits and interacts with unc-83 to form a bridge connecting the nuclear envelope to the cytoskeleton which allows for nuclear transport along microtubules. Its role in nuclear migration may be in association with lamin, lmn-1. Regulates nuclear migrations in one-cell embryos, controlling the posterior migration of the male pronucleus following fertilization. Not required for centrosome attachment to the nucleus. Plays a role in the maintenance of the nuclear envelope architecture in body wall muscle cells. May be involved in DNA damage repair through an association with zyg-12. Potentially has roles in homologous recombination, double strand break repair and meiotic recombination. Specifically, may in part inhibit non-homologous end joining repair, most likely through recruiting fan-1 to the nucleoplasm, to facilitate the repair of DNA cross-links. The chain is Nuclear migration and anchoring protein unc-84 from Caenorhabditis elegans.